The sequence spans 155 residues: Protein-export protein SecB (155 aa).

It belongs to the SecB family. Homotetramer, a dimer of dimers. One homotetramer interacts with 1 SecA dimer.

The protein localises to the cytoplasm. In terms of biological role, one of the proteins required for the normal export of preproteins out of the cell cytoplasm. It is a molecular chaperone that binds to a subset of precursor proteins, maintaining them in a translocation-competent state. It also specifically binds to its receptor SecA. In Shigella sonnei (strain Ss046), this protein is Protein-export protein SecB.